A 408-amino-acid chain; its full sequence is Peptidase T-like protein RB0614 (408 aa).

Residue His80 participates in Zn(2+) binding. The active site involves Asp82. Asp142 lines the Zn(2+) pocket. Residue Glu174 is the Proton acceptor of the active site. Zn(2+) is bound by residues Glu175, Asp198, and His380.

This sequence belongs to the peptidase M20B family. Zn(2+) is required as a cofactor.

The chain is Peptidase T-like protein RB0614 from Rhizobium meliloti (strain 1021) (Ensifer meliloti).